Reading from the N-terminus, the 378-residue chain is L-lactate dehydrogenase (378 aa).

Residues 1–378 enclose the FMN hydroxy acid dehydrogenase domain; sequence MIISASTDYR…ELSRDSLVKR (378 aa). Substrate is bound at residue tyrosine 24. Serine 106 and glutamine 127 together coordinate FMN. Tyrosine 129 contributes to the substrate binding site. Residue threonine 155 participates in FMN binding. Arginine 164 contributes to the substrate binding site. Lysine 251 contributes to the FMN binding site. Histidine 275 serves as the catalytic Proton acceptor. Residue arginine 278 coordinates substrate. 306–330 is an FMN binding site; the sequence is DSGIRTGLDVVRMLALGADCTMLGR.

The protein belongs to the FMN-dependent alpha-hydroxy acid dehydrogenase family. FMN is required as a cofactor.

The protein resides in the cell inner membrane. The catalysed reaction is (S)-lactate + A = pyruvate + AH2. In terms of biological role, catalyzes the conversion of L-lactate to pyruvate. Is coupled to the respiratory chain. This is L-lactate dehydrogenase from Vibrio cholerae serotype O1 (strain ATCC 39315 / El Tor Inaba N16961).